Here is a 276-residue protein sequence, read N- to C-terminus: MRAPHLHLSAASGARALAKLLPLLMAQLWAAEAALLPQNDTRLDPEAYGSPCARGSQPWQVSLFNGLSFHCAGVLVDQSWVLTAAHCGNKPLWARVGDDHLLLLQGEQLRRTTRSVVHPKYHQGSGPILPRRTDEHDLMLLKLARPVVLGPRVRALQLPYRCAQPGDQCQVAGWGTTAARRVKYNKGLTCSSITILSPKECEVFYPGVVTNNMICAGLDRGQDPCQSDSGGPLVCDETLQGILSWGVYPCGSAQHPAVYTQICKYMSWINKVIRSN.

A signal peptide spans 1–30; that stretch reads MRAPHLHLSAASGARALAKLLPLLMAQLWA. N-linked (GlcNAc...) asparagine glycosylation is present at asparagine 39. The Peptidase S1 domain occupies 47–274; the sequence is AYGSPCARGS…YMSWINKVIR (228 aa). 5 disulfides stabilise this stretch: cysteine 52–cysteine 162, cysteine 71–cysteine 87, cysteine 169–cysteine 235, cysteine 201–cysteine 215, and cysteine 225–cysteine 250. Residues histidine 86 and aspartate 137 each act as charge relay system in the active site. The active-site Charge relay system is the serine 229.

This sequence belongs to the peptidase S1 family. Kallikrein subfamily. As to expression, expressed in breast, ovary and prostate.

Its subcellular location is the secreted. Its function is as follows. Has a tumor-suppressor role for NES1 in breast and prostate cancer. The protein is Kallikrein-10 (KLK10) of Homo sapiens (Human).